We begin with the raw amino-acid sequence, 291 residues long: Tyrosine recombinase XerD (291 aa).

Positions Met1–Glu82 constitute a Core-binding (CB) domain. The region spanning Asn103 to Lys285 is the Tyr recombinase domain. Active-site residues include Arg143, Lys167, His237, Arg240, and His263. The active-site O-(3'-phospho-DNA)-tyrosine intermediate is Tyr272.

Belongs to the 'phage' integrase family. XerD subfamily. Forms a cyclic heterotetrameric complex composed of two molecules of XerC and two molecules of XerD.

It localises to the cytoplasm. Its function is as follows. Site-specific tyrosine recombinase, which acts by catalyzing the cutting and rejoining of the recombining DNA molecules. The XerC-XerD complex is essential to convert dimers of the bacterial chromosome into monomers to permit their segregation at cell division. It also contributes to the segregational stability of plasmids. This chain is Tyrosine recombinase XerD, found in Neisseria meningitidis serogroup A / serotype 4A (strain DSM 15465 / Z2491).